A 183-amino-acid polypeptide reads, in one-letter code: Protein AC4 (183 aa).

It belongs to the geminiviridae protein AC4/C4 family.

In terms of biological role, pathogenicity determinant. May act as a suppressor of RNA-mediated gene silencing, also known as post-transcriptional gene silencing (PTGS), a mechanism of plant viral defense that limits the accumulation of viral RNAs. This African cassava mosaic virus (isolate West Kenyan 844) (ACMV) protein is Protein AC4.